A 504-amino-acid polypeptide reads, in one-letter code: Peroxisome proliferator-activated receptor gamma (504 aa).

At S111 the chain carries Phosphoserine; by MAPK. Residues A135–F209 constitute a DNA-binding region (nuclear receptor). 2 consecutive NR C4-type zinc fingers follow at residues C138–C158 and C175–C197. An interaction with FAM120B region spans residues H204–M279. An NR LBD domain is found at D237–D502. K251 participates in a covalent cross-link: Glycyl lysine isopeptide (Lys-Gly) (interchain with G-Cter in ubiquitin). A 9aaTAD motif is present at residues P494–D502.

The protein belongs to the nuclear hormone receptor family. NR1 subfamily. As to quaternary structure, interacts with FOXO1 (acetylated form). Heterodimer with other nuclear receptors, such as RXRA. The heterodimer with the retinoic acid receptor RXRA is called adipocyte-specific transcription factor ARF6. Interacts with NCOA6 coactivator, leading to a strong increase in transcription of target genes. Interacts with coactivator PPARBP, leading to a mild increase in transcription of target genes. Interacts with NOCA7 in a ligand-inducible manner. Interacts with NCOA1 and NCOA2 LXXLL motifs. Interacts with ASXL1, ASXL2, DNTTIP2, FAM120B, MAP2K1/MEK1, NR0B2, PDPK1, PRDM16, PRMT2 and TGFB1I1. Interacts (when activated by agonist) with PPP5C. Interacts with HELZ2 and THRAP3; the interaction stimulates the transcriptional activity of PPARG. Interacts with PER2, the interaction is ligand dependent and blocks PPARG recruitment to target promoters. Interacts with NOCT. Interacts with ACTN4. Interacts (when in the liganded conformation) with GPS2. Interacts with CRY1 and CRY2 in a ligand-dependent manner. In the absence of hormonal ligand, interacts with TACC1. In macrophages, interacts with PAQR3 and STUB1; the interactions promote PPARG poylubiquitination and STUB1-mediated degradation. In terms of processing, phosphorylated at basal conditions and dephosphorylated when treated with the ligand. May be dephosphorylated by PPP5C. The phosphorylated form may be inactive and dephosphorylation induces adipogenic activity. Ubiquitinated by E3 ubiquitin-protein ligase complex containing FBXO9; leading to proteasomal degradation. Ubiquitinated at Lys-251 by TRIM55 leading to proteasomal degradation. Ubiquitinated by E3 ubiquitin-protein ligase STUB1/CHIP; leading to proteasomal degradation. Highest expression in adipose tissue and lower in spleen. Very low levels in kidney, intestine, lung and muscle.

The protein resides in the nucleus. Its subcellular location is the cytoplasm. With respect to regulation, PDPK1 activates its transcriptional activity independently of its kinase activity. Functionally, nuclear receptor that binds peroxisome proliferators such as hypolipidemic drugs and fatty acids. Once activated by a ligand, the nuclear receptor binds to DNA specific PPAR response elements (PPRE) and modulates the transcription of its target genes, such as acyl-CoA oxidase. It therefore controls the peroxisomal beta-oxidation pathway of fatty acids. Key regulator of adipocyte differentiation and glucose homeostasis. ARF6 acts as a key regulator of the tissue-specific adipocyte P2 (aP2) enhancer. Acts as a critical regulator of gut homeostasis by suppressing NF-kappa-B-mediated pro-inflammatory responses. Plays a role in the regulation of cardiovascular circadian rhythms by regulating the transcription of BMAL1 in the blood vessels. This Sus scrofa (Pig) protein is Peroxisome proliferator-activated receptor gamma (PPARG).